The primary structure comprises 408 residues: Cobalt-precorrin-5B C(1)-methyltransferase (408 aa).

Belongs to the CbiD family.

The catalysed reaction is Co-precorrin-5B + S-adenosyl-L-methionine = Co-precorrin-6A + S-adenosyl-L-homocysteine. Its pathway is cofactor biosynthesis; adenosylcobalamin biosynthesis; cob(II)yrinate a,c-diamide from sirohydrochlorin (anaerobic route): step 6/10. Its function is as follows. Catalyzes the methylation of C-1 in cobalt-precorrin-5B to form cobalt-precorrin-6A. The sequence is that of Cobalt-precorrin-5B C(1)-methyltransferase from Clostridioides difficile (strain 630) (Peptoclostridium difficile).